The sequence spans 509 residues: ATP synthase subunit alpha (509 aa).

Residue 169–176 (GDRQTGKT) participates in ATP binding.

This sequence belongs to the ATPase alpha/beta chains family. In terms of assembly, F-type ATPases have 2 components, CF(1) - the catalytic core - and CF(0) - the membrane proton channel. CF(1) has five subunits: alpha(3), beta(3), gamma(1), delta(1), epsilon(1). CF(0) has three main subunits: a(1), b(2) and c(9-12). The alpha and beta chains form an alternating ring which encloses part of the gamma chain. CF(1) is attached to CF(0) by a central stalk formed by the gamma and epsilon chains, while a peripheral stalk is formed by the delta and b chains.

It localises to the cell inner membrane. It carries out the reaction ATP + H2O + 4 H(+)(in) = ADP + phosphate + 5 H(+)(out). Its function is as follows. Produces ATP from ADP in the presence of a proton gradient across the membrane. The alpha chain is a regulatory subunit. In Paramagnetospirillum magneticum (strain ATCC 700264 / AMB-1) (Magnetospirillum magneticum), this protein is ATP synthase subunit alpha.